Reading from the N-terminus, the 182-residue chain is Alkyl hydroperoxide reductase AhpD (182 aa).

The Proton donor role is filled by C132. Cysteines 132 and 135 form a disulfide. The active-site Cysteine sulfenic acid (-SOH) intermediate is C135.

Belongs to the AhpD family.

It catalyses the reaction N(6)-[(R)-dihydrolipoyl]-L-lysyl-[lipoyl-carrier protein] + a hydroperoxide = N(6)-[(R)-lipoyl]-L-lysyl-[lipoyl-carrier protein] + an alcohol + H2O. Antioxidant protein with alkyl hydroperoxidase activity. Required for the reduction of the AhpC active site cysteine residues and for the regeneration of the AhpC enzyme activity. In Bradyrhizobium diazoefficiens (strain JCM 10833 / BCRC 13528 / IAM 13628 / NBRC 14792 / USDA 110), this protein is Alkyl hydroperoxide reductase AhpD.